We begin with the raw amino-acid sequence, 2136 residues long: U5 small nuclear ribonucleoprotein 200 kDa helicase (2136 aa).

Phosphoserine is present on residues serine 17 and serine 26. Residue lysine 46 forms a Glycyl lysine isopeptide (Lys-Gly) (interchain with G-Cter in SUMO2) linkage. The segment at 50–80 (TRMGDKAQRTKPQMQEERRAKRRKRDEDRHD) is disordered. Residues 54–84 (DKAQRTKPQMQEERRAKRRKRDEDRHDINKM) adopt a coiled-coil conformation. Serine 225 is subject to Phosphoserine. A Phosphothreonine modification is found at threonine 389. An interaction with C9orf78 and WBP4 region spans residues 395–2129 (DLDQGGEALA…YKFSVDVKEA (1735 aa)). The region spanning 490–673 (RAALETDENL…FLRVDPAKGL (184 aa)) is the Helicase ATP-binding 1 domain. ATP is bound at residue 503–510 (APTGAGKT). Residues 615 to 618 (DEIH) carry the DEIH box motif. A Helicase C-terminal 1 domain is found at 684–921 (PLEQTYVGIT…NAKDAVNWLG (238 aa)). Residue tyrosine 709 is modified to Phosphotyrosine. Lysine 971 is subject to N6-acetyllysine. An SEC63 1 domain is found at 981 to 1286 (VTELGRIASH…SCETQLPVSF (306 aa)). The segment at 1282 to 2136 (LPVSFRHLIL…KEAETDSDSD (855 aa)) is interaction with TSSC4. The 176-residue stretch at 1337–1512 (NTVYNSDDNV…WLGCSATSTF (176 aa)) folds into the Helicase ATP-binding 2 domain. 1350–1357 (APTGSGKT) serves as a coordination point for ATP. A Phosphothreonine modification is found at threonine 1428. The DEVH box signature appears at 1454–1457 (DEVH). Residues 1545–1753 (PVYHAITKHS…TIENKQDAVD (209 aa)) enclose the Helicase C-terminal 2 domain. Threonine 1765 is subject to Phosphothreonine. In terms of domain architecture, SEC63 2 spans 1812–2124 (PLNLGMIAAY…GCDQEYKFSV (313 aa)). Serine 2002 is modified (phosphoserine). Threonine 2131 carries the post-translational modification Phosphothreonine. A phosphoserine mark is found at serine 2133 and serine 2135.

Belongs to the helicase family. SKI2 subfamily. Component of a core complex containing at least PRPF8, SNRNP200, EFTUD2 and SNRNP40. Component of the U5 snRNP and U4/U6-U5 tri-snRNP complexes, building blocks of the spliceosome. Component of the U4/U6-U5 tri-snRNP complex composed of the U4, U6 and U5 snRNAs and at least PRPF3, PRPF4, PRPF6, PRPF8, PRPF31, SNRNP200, TXNL4A, SNRNP40, DDX23, CD2BP2, PPIH, SNU13, EFTUD2, SART1 and USP39. Component of precatalytic, catalytic and postcatalytic spliceosomal complexes. Component of the minor spliceosome, which splices U12-type introns. Interacts with C9orf78; the interaction is direct and mutually exclusive with its interaction with WBP4. Interacts with WBP4; the interaction is mutually exclusive with its interaction with C9orf78. Interacts with PRPF8. Interacts with TSSC4; the interaction is direct, excludes recruitment of C9ORF78 and WBP4 to SNRNP200 and negatively regulates its RNA helicase activity. In terms of tissue distribution, widely expressed.

Its subcellular location is the nucleus. It catalyses the reaction ATP + H2O = ADP + phosphate + H(+). Catalyzes the ATP-dependent unwinding of U4/U6 RNA duplices, an essential step in the assembly of a catalytically active spliceosome. Plays a role in pre-mRNA splicing as a core component of precatalytic, catalytic and postcatalytic spliceosomal complexes. As a component of the minor spliceosome, involved in the splicing of U12-type introns in pre-mRNAs. Involved in spliceosome assembly, activation and disassembly. Mediates changes in the dynamic network of RNA-RNA interactions in the spliceosome. This is U5 small nuclear ribonucleoprotein 200 kDa helicase (SNRNP200) from Homo sapiens (Human).